A 416-amino-acid polypeptide reads, in one-letter code: 26S proteasome regulatory subunit 8 (416 aa).

Positions 1–18 are enriched in low complexity; that stretch reads MAPPASTASSADPSKPTA. Residues 1–29 form a disordered region; the sequence is MAPPASTASSADPSKPTAQKLTEESDEKT. Position 200–207 (200–207) interacts with ATP; that stretch reads GPPGTGKT.

Belongs to the AAA ATPase family. In terms of assembly, component of the 19S proteasome regulatory particle complex. The 26S proteasome consists of a 20S core particle (CP) and two 19S regulatory subunits (RP). Interacts with elt-2.

The protein resides in the cytoplasm. It localises to the nucleus. In terms of biological role, component of the 26S proteasome, a multiprotein complex involved in the ATP-dependent degradation of ubiquitinated proteins. This complex plays a key role in the maintenance of protein homeostasis by removing misfolded or damaged proteins, which could impair cellular functions, and by removing proteins whose functions are no longer required. Therefore, the proteasome participates in numerous cellular processes, including cell cycle progression, apoptosis, or DNA damage repair. Belongs to the heterohexameric ring of AAA (ATPases associated with diverse cellular activities) proteins that unfolds ubiquitinated target proteins that are concurrently translocated into a proteolytic chamber and degraded into peptides. In addition, regulates gene expression in response to bacterial infection. Binds to the GATA transcription factor elt-2 to control its transcriptional activity and thus the expression of elt-2-dependent genes in response to infection by Gram-negative bacteria such as P.aeruginosa. In Caenorhabditis elegans, this protein is 26S proteasome regulatory subunit 8.